Consider the following 398-residue polypeptide: Histidinol-phosphate aminotransferase (398 aa).

Polar residues predominate over residues 1–10; sequence MTGQRATPQP. The interval 1–30 is disordered; that stretch reads MTGQRATPQPTLDDLPLRDDLRGKSPYGAP. Position 234 is an N6-(pyridoxal phosphate)lysine (Lys234).

Belongs to the class-II pyridoxal-phosphate-dependent aminotransferase family. Histidinol-phosphate aminotransferase subfamily. In terms of assembly, homodimer. It depends on pyridoxal 5'-phosphate as a cofactor.

The catalysed reaction is L-histidinol phosphate + 2-oxoglutarate = 3-(imidazol-4-yl)-2-oxopropyl phosphate + L-glutamate. It participates in amino-acid biosynthesis; L-histidine biosynthesis; L-histidine from 5-phospho-alpha-D-ribose 1-diphosphate: step 7/9. The protein is Histidinol-phosphate aminotransferase of Mycolicibacterium paratuberculosis (strain ATCC BAA-968 / K-10) (Mycobacterium paratuberculosis).